The chain runs to 215 residues: HTH-type transcriptional repressor FabR (215 aa).

The 61-residue stretch at 10–70 (KTRRSLVEAA…TMVDESGLML (61 aa)) folds into the HTH tetR-type domain. Residues 33 to 52 (SLREVAREAGIAPTSFYRHF) constitute a DNA-binding region (H-T-H motif).

Homodimer.

The protein resides in the cytoplasm. Its function is as follows. Represses the transcription of fabB, involved in unsaturated fatty acid (UFA) biosynthesis. By controlling UFA production, FabR directly influences the physical properties of the membrane bilayer. In Escherichia coli O9:H4 (strain HS), this protein is HTH-type transcriptional repressor FabR.